The chain runs to 372 residues: PqqA peptide cyclase (372 aa).

In terms of domain architecture, Radical SAM core spans 4–219 (APPPLSVLLE…VDTARRELGD (216 aa)). [4Fe-4S] cluster contacts are provided by Cys18, Cys22, and Cys25. A disordered region spans residues 342–372 (ATAEREAAAPAPEFIYRRPERPAPATADTLE).

Belongs to the radical SAM superfamily. PqqE family. Interacts with PqqD. The interaction is necessary for activity of PqqE. Requires [4Fe-4S] cluster as cofactor.

The enzyme catalyses [PQQ precursor protein] + S-adenosyl-L-methionine = E-Y cross-linked-[PQQ precursor protein] + 5'-deoxyadenosine + L-methionine + H(+). It participates in cofactor biosynthesis; pyrroloquinoline quinone biosynthesis. Functionally, catalyzes the cross-linking of a glutamate residue and a tyrosine residue in the PqqA protein as part of the biosynthesis of pyrroloquinoline quinone (PQQ). This chain is PqqA peptide cyclase, found in Xanthomonas oryzae pv. oryzae (strain MAFF 311018).